The primary structure comprises 546 residues: High-affinity glucose transporter ght5 (546 aa).

Residues 1-9 (MGKNLTIVM) are Cytoplasmic-facing. A helical membrane pass occupies residues 10 to 30 (LVFVSMAGWMFGADTGSIGGI). At 31-58 (TNMRDFQSRFADRYNPVTDSYSYSSARQ) the chain is on the extracellular side. A helical transmembrane segment spans residues 59 to 79 (GLITGMVNVGSFFGCFLSSPL). Residues 80–87 (MDRIGKRT) lie on the Cytoplasmic side of the membrane. A helical transmembrane segment spans residues 88-108 (SIMFWTIVYLIGIILQVTAVP). Over 109–112 (SWVQ) the chain is Extracellular. Residues 113–133 (IMVAKIWTGLSIGALSVLAPG) form a helical membrane-spanning segment. Topologically, residues 134–144 (FQSEVAPADLR) are cytoplasmic. The chain crosses the membrane as a helical span at residues 145 to 165 (GTIVTTYQLAVTGGIFIAACI). Residues 166–179 (NMGTHKLHKTAQWR) lie on the Extracellular side of the membrane. Residues 180 to 200 (VSMGINLLWGIITFIGISFLP) form a helical membrane-spanning segment. At 201–266 (ESPRYLISVG…IFGPDIRYRT (66 aa)) the chain is on the cytoplasmic side. The chain crosses the membrane as a helical span at residues 267–285 (FLGLGVMSLQQLTGDNYYF). Over 286–301 (YYGFEVFEGTGMNSPY) the chain is Extracellular. A helical transmembrane segment spans residues 302–322 (LSALILDAVNFGCTFGGLFVL). Over 323–328 (EFFGRR) the chain is Cytoplasmic. The chain crosses the membrane as a helical span at residues 329 to 349 (MPLIIGALWQSITFFIYAAVG). The Extracellular portion of the chain corresponds to 350-363 (NRALTRKNGTSNHR). N357 carries N-linked (GlcNAc...) asparagine glycosylation. A helical membrane pass occupies residues 364 to 384 (AGAVMIVFSCLFIFSFAQTWG). The Cytoplasmic segment spans residues 385–404 (PAAYVIVGESYPIRYRSKCA). A helical transmembrane segment spans residues 405 to 425 (AVATTGNWLWGFLISFFTPFI). The Extracellular segment spans residues 426-432 (TNSIGFK). A helical transmembrane segment spans residues 433–453 (YGYIFAACNLCAACIIFLFAH). Over 454–546 (ETKGLTLEEI…SYHDQEEQFA (93 aa)) the chain is Cytoplasmic. The segment at 486–546 (KQQEEVREKS…SYHDQEEQFA (61 aa)) is disordered. The segment covering 487-496 (QQEEVREKSR) has biased composition (basic and acidic residues). The segment covering 509-519 (VDGEEGIEDSS) has biased composition (acidic residues). The span at 520 to 529 (NDISSTTSSD) shows a compositional bias: low complexity. Residues S528 and S537 each carry the phosphoserine modification. Over residues 530–546 (GRAKPESSYHDQEEQFA) the composition is skewed to basic and acidic residues.

This sequence belongs to the major facilitator superfamily. Sugar transporter (TC 2.A.1.1) family.

The protein localises to the membrane. High-affinity glucose transporter. The sequence is that of High-affinity glucose transporter ght5 (ght5) from Schizosaccharomyces pombe (strain 972 / ATCC 24843) (Fission yeast).